The sequence spans 93 residues: Large ribosomal subunit protein uL23 (93 aa).

This sequence belongs to the universal ribosomal protein uL23 family. In terms of assembly, part of the 50S ribosomal subunit. Contacts protein L29, and trigger factor when it is bound to the ribosome.

Its function is as follows. One of the early assembly proteins it binds 23S rRNA. One of the proteins that surrounds the polypeptide exit tunnel on the outside of the ribosome. Forms the main docking site for trigger factor binding to the ribosome. The sequence is that of Large ribosomal subunit protein uL23 from Wolinella succinogenes (strain ATCC 29543 / DSM 1740 / CCUG 13145 / JCM 31913 / LMG 7466 / NCTC 11488 / FDC 602W) (Vibrio succinogenes).